Here is a 977-residue protein sequence, read N- to C-terminus: Monofunctional C1-tetrahydrofolate synthase, mitochondrial (977 aa).

The N-terminal 31 residues, 1–31 (MSVRLPLLLRQLGRQQLPSGPACRLRELCRS), are a transit peptide targeting the mitochondrion. The tract at residues 29 to 71 (CRSGSRSSSSGGGDPEGLRGRRLQDGQTFSSHGPGNPEAPGMD) is disordered. The methylenetetrahydrofolate dehydrogenase and cyclohydrolase stretch occupies residues 32 to 347 (GSRSSSSGGG…REQQHRRWRL (316 aa)). Position 188 is an N6-acetyllysine; alternate (K188). K188 is modified (N6-succinyllysine; alternate). Positions 348 to 977 (HCLKLQPLSP…TETEQVKGLF (630 aa)) are formyltetrahydrofolate synthetase. S356 carries the phosphoserine modification. 422–429 (TPLGEGKS) is a binding site for ATP. The residue at position 595 (K595) is an N6-succinyllysine.

This sequence in the N-terminal section; belongs to the tetrahydrofolate dehydrogenase/cyclohydrolase family. It in the C-terminal section; belongs to the formate--tetrahydrofolate ligase family. As to quaternary structure, homodimer.

It localises to the mitochondrion. It catalyses the reaction (6S)-5,6,7,8-tetrahydrofolate + formate + ATP = (6R)-10-formyltetrahydrofolate + ADP + phosphate. Its pathway is one-carbon metabolism; tetrahydrofolate interconversion. Its function is as follows. May provide the missing metabolic reaction required to link the mitochondria and the cytoplasm in the mammalian model of one-carbon folate metabolism complementing thus the enzymatic activities of MTHFD2. In Mus musculus (Mouse), this protein is Monofunctional C1-tetrahydrofolate synthase, mitochondrial (Mthfd1l).